The primary structure comprises 500 residues: L-arabinose isomerase (500 aa).

Positions 306, 333, 350, and 450 each coordinate Mn(2+).

Belongs to the arabinose isomerase family. Homohexamer. It depends on Mn(2+) as a cofactor.

It catalyses the reaction beta-L-arabinopyranose = L-ribulose. It participates in carbohydrate degradation; L-arabinose degradation via L-ribulose; D-xylulose 5-phosphate from L-arabinose (bacterial route): step 1/3. Functionally, catalyzes the conversion of L-arabinose to L-ribulose. This chain is L-arabinose isomerase, found in Escherichia coli O17:K52:H18 (strain UMN026 / ExPEC).